The primary structure comprises 168 residues: 2-C-methyl-D-erythritol 2,4-cyclodiphosphate synthase (168 aa).

2 residues coordinate a divalent metal cation: aspartate 13 and histidine 15. 4-CDP-2-C-methyl-D-erythritol 2-phosphate-binding positions include 13-15 (DVH) and 39-40 (HS). Residue histidine 47 coordinates a divalent metal cation. 4-CDP-2-C-methyl-D-erythritol 2-phosphate-binding positions include 61–63 (DIG), 66–70 (FPDTD), phenylalanine 144, and lysine 147.

It belongs to the IspF family. Homotrimer. It depends on a divalent metal cation as a cofactor.

It carries out the reaction 4-CDP-2-C-methyl-D-erythritol 2-phosphate = 2-C-methyl-D-erythritol 2,4-cyclic diphosphate + CMP. Its pathway is isoprenoid biosynthesis; isopentenyl diphosphate biosynthesis via DXP pathway; isopentenyl diphosphate from 1-deoxy-D-xylulose 5-phosphate: step 4/6. Involved in the biosynthesis of isopentenyl diphosphate (IPP) and dimethylallyl diphosphate (DMAPP), two major building blocks of isoprenoid compounds. Catalyzes the conversion of 4-diphosphocytidyl-2-C-methyl-D-erythritol 2-phosphate (CDP-ME2P) to 2-C-methyl-D-erythritol 2,4-cyclodiphosphate (ME-CPP) with a corresponding release of cytidine 5-monophosphate (CMP). The sequence is that of 2-C-methyl-D-erythritol 2,4-cyclodiphosphate synthase from Ralstonia pickettii (strain 12J).